The sequence spans 300 residues: MHFQDIITTLNSFWADQGCVLLQPYDTEKGAGTMSPHTVLRAIGPEPWAVAYPEPCRRPTDGRYGDNPNRAQHYFQYQVLIKPSPVGIQETYLASLEALGVCTAEHDIRFVEDNWESPTLGAWGVGWEVWLDGMEVTQFTYFQQCGGLDCSPVPIEITYGIERLAMYLQNVENIWDLSWNNKRSYGDIWLSLEKGQCDFNFESSDPSRLKQLFDLYEAEASDLIAKQLPAPALDFVLKCSHTFNLLEARGVISVTERTATIGRIRSLARGVAEAWLTEREAMGFPLLNNKALPLDQPLQS.

Belongs to the class-II aminoacyl-tRNA synthetase family. In terms of assembly, tetramer of two alpha and two beta subunits.

It is found in the cytoplasm. The catalysed reaction is tRNA(Gly) + glycine + ATP = glycyl-tRNA(Gly) + AMP + diphosphate. The chain is Glycine--tRNA ligase alpha subunit from Prochlorococcus marinus (strain MIT 9313).